A 255-amino-acid polypeptide reads, in one-letter code: Accessory gland-specific peptide 26Aa (255 aa).

A signal peptide spans 1–18 (MNLILLCSQILLLLFTVA). The interval 86-110 (PINNSKSRKNSSTLPSQILTDKPNQ) is disordered. The segment covering 87-110 (INNSKSRKNSSTLPSQILTDKPNQ) has biased composition (polar residues). Asparagine 88, asparagine 95, and asparagine 136 each carry an N-linked (GlcNAc...) asparagine glycan. Disordered regions lie at residues 177-196 (NAQN…SKDI) and 235-255 (NNPA…PSTT). A compositionally biased stretch (basic residues) spans 183-192 (KSTKSCKKRP). The span at 245–255 (KSPSEGNPSTT) shows a compositional bias: polar residues.

In terms of processing, it undergoes several cleavages as it is secreted and it is further processed in the recipient female. Main cells of the accessory glands of males.

It localises to the secreted. Its subcellular location is the extracellular space. In terms of biological role, this protein is transferred from male to female's hemolymph during mating, affecting egglaying and behavior after mating. In Drosophila sechellia (Fruit fly), this protein is Accessory gland-specific peptide 26Aa (Acp26Aa).